A 436-amino-acid polypeptide reads, in one-letter code: MSEIQPKTEVPPKTVEEEEESDDEEDNTKVTEGGNPTGGEGAAKKKKKKNKKKKKAAPVASAADIIDSKPIPSGLVQTNPPTIPVSKQFSNGVYPMGEIQEYRDSNSYRTTSEEKRLEERIHANIYNDVRRAAEVHRQVRKYVQGIVKPGLGLTELVESLENASRTLIEADGLKAGIAFPTGVSLNHIAAHFTPNTGDKTVLKKDDVLKIDFGTHVNGYIIDCAFTVTFDEKYDKLKDAVREATNTGIYHAGIDARLGEIGAAIQEVMESHEIELNGKTYPIRSIRNLNGHSIRPYVIHGGKTVPIVRGGEMTKMEEGEFYAIETFGSTGRAQVIEDLECSHYMKTDYQTTVRLPKAKQLLQYINKNYDTLCFCRRWLDRAGEDKHILALNNLCDLGIIQRHAPLVDSKGSYVAQYEHTLLLKPTAKEVLSRGDDY.

Residues 1–61 (MSEIQPKTEV…KKKKAAPVAS (61 aa)) are disordered. Residues 16 to 26 (EEEEESDDEED) are compositionally biased toward acidic residues. Basic residues predominate over residues 44 to 56 (KKKKKKNKKKKKA). Histidine 191 lines the substrate pocket. Aspartate 211, aspartate 222, and histidine 291 together coordinate a divalent metal cation. Position 299 (histidine 299) interacts with substrate. Positions 324 and 417 each coordinate a divalent metal cation.

It belongs to the peptidase M24A family. Methionine aminopeptidase eukaryotic type 2 subfamily. Co(2+) is required as a cofactor. Zn(2+) serves as cofactor. The cofactor is Mn(2+). Requires Fe(2+) as cofactor.

The protein localises to the cytoplasm. The catalysed reaction is Release of N-terminal amino acids, preferentially methionine, from peptides and arylamides.. Cotranslationally removes the N-terminal methionine from nascent proteins. The N-terminal methionine is often cleaved when the second residue in the primary sequence is small and uncharged (Met-Ala-, Cys, Gly, Pro, Ser, Thr, or Val). The chain is Methionine aminopeptidase 2 (metap2) from Dictyostelium discoideum (Social amoeba).